Here is a 556-residue protein sequence, read N- to C-terminus: 2-succinyl-5-enolpyruvyl-6-hydroxy-3-cyclohexene-1-carboxylate synthase (556 aa).

Belongs to the TPP enzyme family. MenD subfamily. Homodimer. It depends on Mg(2+) as a cofactor. Mn(2+) is required as a cofactor. Thiamine diphosphate serves as cofactor.

The enzyme catalyses isochorismate + 2-oxoglutarate + H(+) = 5-enolpyruvoyl-6-hydroxy-2-succinyl-cyclohex-3-ene-1-carboxylate + CO2. Its pathway is quinol/quinone metabolism; 1,4-dihydroxy-2-naphthoate biosynthesis; 1,4-dihydroxy-2-naphthoate from chorismate: step 2/7. The protein operates within quinol/quinone metabolism; menaquinone biosynthesis. In terms of biological role, catalyzes the thiamine diphosphate-dependent decarboxylation of 2-oxoglutarate and the subsequent addition of the resulting succinic semialdehyde-thiamine pyrophosphate anion to isochorismate to yield 2-succinyl-5-enolpyruvyl-6-hydroxy-3-cyclohexene-1-carboxylate (SEPHCHC). The protein is 2-succinyl-5-enolpyruvyl-6-hydroxy-3-cyclohexene-1-carboxylate synthase of Shigella boydii serotype 4 (strain Sb227).